We begin with the raw amino-acid sequence, 162 residues long: Caveolin-2 (162 aa).

Over 1–86 (MGLETEKADV…FEISKYVMYK (86 aa)) the chain is Cytoplasmic. Position 19 is a phosphotyrosine; by SRC (Tyr-19). Ser-20 carries the post-translational modification Phosphoserine. Tyr-27 bears the Phosphotyrosine; by SRC mark. A Phosphoserine modification is found at Ser-36. The helical intramembrane region spans 87 to 107 (FLTVFLAIPLAFAAGILFATL). Residues 108-162 (SCLHIWIIMPFVKTCLMVLPSVQTIWKSVTDVIIAPLCTSVGRSLSSISLQLSHD) are Cytoplasmic-facing.

This sequence belongs to the caveolin family. Monomer or homodimer. Interacts with CAV1; the interaction forms a stable heterooligomeric complex that is required for targeting to lipid rafts and for caveolae formation. Tyrosine phosphorylated forms do not form heterooligomers with the Tyr-19-phosphorylated form existing as a monomer or dimer, and the Tyr-27-form as a monomer only. Interacts (tyrosine phosphorylated form) with the SH2 domain-containing proteins, RASA1, NCK1 and SRC. Interacts (tyrosine phosphorylated form) with INSR, the interaction (Tyr-27-phosphorylated form) is increased on insulin stimulation. Interacts (Tyr-19 phosphorylated form) with MAPK1 (phosphorylated form); the interaction, promoted by insulin, leads to nuclear location and MAPK1 activation. Interacts with STAT3; the interaction is increased on insulin-induced tyrosine phosphorylation leading to STAT activation. Post-translationally, phosphorylated on serine and tyrosine residues. Phosphorylation on Ser-36 appears to modulate mitosis in endothelial cells. Phosphorylation on both Tyr-19 and Tyr-27 is required for insulin-induced 'Ser-727' phosphorylation of STAT3 and its activation. Phosphorylation on Tyr-19 is required for insulin-induced phosphorylation of MAPK1 and DNA binding of STAT3. Tyrosine phosphorylation is induced by both EGF and insulin.

The protein resides in the nucleus. Its subcellular location is the cytoplasm. It localises to the golgi apparatus membrane. The protein localises to the cell membrane. It is found in the membrane. The protein resides in the caveola. In terms of biological role, may act as a scaffolding protein within caveolar membranes. Interacts directly with G-protein alpha subunits and can functionally regulate their activity. Acts as an accessory protein in conjunction with CAV1 in targeting to lipid rafts and driving caveolae formation. The Ser-36 phosphorylated form has a role in modulating mitosis in endothelial cells. Positive regulator of cellular mitogenesis of the MAPK signaling pathway. Required for the insulin-stimulated nuclear translocation and activation of MAPK1 and STAT3, and the subsequent regulation of cell cycle progression. This chain is Caveolin-2 (CAV2), found in Eulemur macaco macaco (Black lemur).